We begin with the raw amino-acid sequence, 167 residues long: Small ribosomal subunit protein uS9 (167 aa).

Disordered stretches follow at residues 1–45 (MSEY…GGAT) and 137–167 (KAGF…FSKR). Residues 9–19 (DTVEDITESDE) are compositionally biased toward acidic residues. Over residues 20–36 (FTGTYTSESSTPATGGN) the composition is skewed to polar residues. Positions 143–152 (RDPRATERKK) are enriched in basic and acidic residues. Residues 153 to 167 (AGLKKARKAPQFSKR) are compositionally biased toward basic residues.

This sequence belongs to the universal ribosomal protein uS9 family.

The sequence is that of Small ribosomal subunit protein uS9 from Kineococcus radiotolerans (strain ATCC BAA-149 / DSM 14245 / SRS30216).